The primary structure comprises 550 residues: Hydroxylamine reductase (550 aa).

Residues Cys-3, Cys-6, Cys-18, and Cys-25 each coordinate [2Fe-2S] cluster. His-249, Glu-273, Cys-317, Cys-405, Cys-433, Cys-458, Glu-492, and Lys-494 together coordinate hybrid [4Fe-2O-2S] cluster. Cys-405 is modified (cysteine persulfide).

The protein belongs to the HCP family. [2Fe-2S] cluster is required as a cofactor. It depends on hybrid [4Fe-2O-2S] cluster as a cofactor.

The protein resides in the cytoplasm. It catalyses the reaction A + NH4(+) + H2O = hydroxylamine + AH2 + H(+). Functionally, catalyzes the reduction of hydroxylamine to form NH(3) and H(2)O. This Escherichia coli (strain SMS-3-5 / SECEC) protein is Hydroxylamine reductase.